The sequence spans 156 residues: Small ribosomal subunit protein uS7 (156 aa).

It belongs to the universal ribosomal protein uS7 family. In terms of assembly, part of the 30S ribosomal subunit. Contacts proteins S9 and S11.

Its function is as follows. One of the primary rRNA binding proteins, it binds directly to 16S rRNA where it nucleates assembly of the head domain of the 30S subunit. Is located at the subunit interface close to the decoding center, probably blocks exit of the E-site tRNA. The polypeptide is Small ribosomal subunit protein uS7 (Burkholderia multivorans (strain ATCC 17616 / 249)).